Here is a 255-residue protein sequence, read N- to C-terminus: Zinc finger CCCH domain-containing protein 37 (255 aa).

2 consecutive C3H1-type zinc fingers follow at residues 98 to 128 (AYTGEPCPDFRRRPGAACPRGSTCPFAHGTF) and 137 to 159 (YRTRPCRAGVACRRRVCFFAHTA).

The sequence is that of Zinc finger CCCH domain-containing protein 37 from Oryza sativa subsp. japonica (Rice).